Here is a 215-residue protein sequence, read N- to C-terminus: uncharacterized protein (215 aa).

It belongs to the HAD-like hydrolase superfamily. CbbY/CbbZ/Gph/YieH family.

This is an uncharacterized protein from Lacticaseibacillus casei (Lactobacillus casei).